Reading from the N-terminus, the 129-residue chain is Trefoil factor 2 (129 aa).

The signal sequence occupies residues 1–23 (MGRRDAQLLAALLVLGLCALAGS). P-type domains lie at 29–73 (CQCS…FHPL) and 79–122 (DQCV…FFPK). 7 disulfide bridges follow: C29–C127, C31–C58, C42–C57, C52–C69, C81–C107, C91–C106, and C101–C118.

In terms of tissue distribution, stomach.

Its subcellular location is the secreted. Inhibits gastrointestinal motility and gastric acid secretion. Could function as a structural component of gastric mucus, possibly by stabilizing glycoproteins in the mucus gel through interactions with carbohydrate side chains. This Homo sapiens (Human) protein is Trefoil factor 2 (TFF2).